Consider the following 870-residue polypeptide: DNA mismatch repair protein MutS (870 aa).

608-615 contacts ATP; it reads GPNMAGKS.

Belongs to the DNA mismatch repair MutS family.

Functionally, this protein is involved in the repair of mismatches in DNA. It is possible that it carries out the mismatch recognition step. This protein has a weak ATPase activity. This chain is DNA mismatch repair protein MutS, found in Persephonella marina (strain DSM 14350 / EX-H1).